Reading from the N-terminus, the 136-residue chain is NADPH-dependent 7-cyano-7-deazaguanine reductase (136 aa).

Cys-53 acts as the Thioimide intermediate in catalysis. Residue Asp-60 is the Proton donor of the active site. Substrate is bound by residues 75-77 (VEL) and 94-95 (HE).

The protein belongs to the GTP cyclohydrolase I family. QueF type 1 subfamily.

It localises to the cytoplasm. The enzyme catalyses 7-aminomethyl-7-carbaguanine + 2 NADP(+) = 7-cyano-7-deazaguanine + 2 NADPH + 3 H(+). It functions in the pathway tRNA modification; tRNA-queuosine biosynthesis. Its function is as follows. Catalyzes the NADPH-dependent reduction of 7-cyano-7-deazaguanine (preQ0) to 7-aminomethyl-7-deazaguanine (preQ1). This Nostoc sp. (strain PCC 7120 / SAG 25.82 / UTEX 2576) protein is NADPH-dependent 7-cyano-7-deazaguanine reductase.